Consider the following 1986-residue polypeptide: Protein Shroom3 (1986 aa).

The interval 1–21 (MKTPENLEEPSATPNPSRTPT) is disordered. The PDZ domain maps to 24–109 (FVYLEALLEG…TLRLVVRRDV (86 aa)). 5 disordered regions span residues 152–199 (CSEP…SSTS), 211–239 (RSPDQCSSQGSMESLEPSGGYPPCHLLSP), 265–285 (TSSSIFEYPPPGGSARERSGS), 342–463 (QGCA…QPLL), and 564–1055 (NEDS…RRIF). S212 carries the phosphoserine modification. Composition is skewed to polar residues over residues 357-376 (PSPSWSQQCSGSLETATDNL) and 415-425 (PQTNSSGSQKT). Positions 430–440 (DQLHTVPERSP) are enriched in basic and acidic residues. S439 and S443 each carry phosphoserine. Residues 595-607 (ACSNHHSLSSPQA) are compositionally biased toward polar residues. Residues 630–645 (QEDHNANLRQKVEREG) are compositionally biased toward basic and acidic residues. The segment covering 653 to 677 (NSGRTRSAFSSLQNIPESLRRQSNV) has biased composition (polar residues). Residues 747–761 (SGASQRRLSSSSSAA) are compositionally biased toward low complexity. Basic and acidic residues predominate over residues 774–785 (KVSRIEEREQGR). 2 stretches are compositionally biased toward low complexity: residues 796-814 (YGPGYRPGRTGPTPSTSSS) and 865-874 (DGRGPPARGG). A Phosphoserine modification is found at S888. The segment covering 895–908 (EAEREASWSEDRPG) has biased composition (basic and acidic residues). Phosphothreonine is present on T909. Phosphoserine is present on residues S912 and S969. An ASD1 domain is found at 927–1023 (IKDAQSRVLG…SEPEKMNEVG (97 aa)). Residues 1004 to 1020 (LTVEQKKRSYSEPEKMN) are compositionally biased toward basic and acidic residues. S1063 and S1066 each carry phosphoserine. Disordered regions lie at residues 1083–1102 (YIQRKTGKRPTGAACTPEAG), 1107–1223 (AQSA…AEDL), 1304–1425 (ATVA…PPWV), and 1446–1654 (ANLK…KTSE). The segment covering 1114-1127 (AGPAAPDGPGLASA) has biased composition (low complexity). The span at 1134–1146 (REPEALPRKEHTH) shows a compositional bias: basic and acidic residues. A phosphoserine mark is found at W1175, V1179, and S1219. Positions 1307-1318 (ASSAPPESSGAA) are enriched in low complexity. 2 positions are modified to phosphoserine: S1350 and S1354. Residues 1366–1399 (YRSQLAMDQQTGQQPPSSPASAVTQPTSPRSPEL) show a composition bias toward polar residues. Positions 1455–1469 (PSRPSSCSTSDPDTP) are enriched in low complexity. Residues 1513 to 1524 (LPPPPPPSPPSE) show a composition bias toward pro residues. A compositionally biased stretch (polar residues) spans 1581-1630 (EGSQIMTATPPQTSAKGSEAESNTPSSASAQPQLNGSPGKQLCPSQTRNL). The span at 1634 to 1654 (PVERTQDLGKKTHAEPQKTSE) shows a compositional bias: basic and acidic residues. Residues 1659–1947 (EALAKEIVHQ…QVRCLLESLP (289 aa)) form the ASD2 domain. The stretch at 1844 to 1890 (RLARVENVLRGLGEDASKEERSSLNEKRKVLAGQHEDARELKENLDR) forms a coiled coil.

This sequence belongs to the shroom family. As to quaternary structure, interacts with F-actin. Interacts with ROCK1.

It localises to the cell junction. The protein resides in the adherens junction. It is found in the cytoplasm. Its subcellular location is the cytoskeleton. The protein localises to the apical cell membrane. Functionally, controls cell shape changes in the neuroepithelium during neural tube closure. Induces apical constriction in epithelial cells by promoting the apical accumulation of F-actin and myosin II, and probably by bundling stress fibers. Induces apicobasal cell elongation by redistributing gamma-tubulin and directing the assembly of robust apicobasal microtubule arrays. The sequence is that of Protein Shroom3 (Shroom3) from Mus musculus (Mouse).